The sequence spans 185 residues: Ribosome-recycling factor (185 aa).

It belongs to the RRF family.

Its subcellular location is the cytoplasm. In terms of biological role, responsible for the release of ribosomes from messenger RNA at the termination of protein biosynthesis. May increase the efficiency of translation by recycling ribosomes from one round of translation to another. This is Ribosome-recycling factor from Streptococcus pneumoniae (strain P1031).